Here is a 396-residue protein sequence, read N- to C-terminus: ATP-dependent RNA helicase eIF4A (396 aa).

Positions 23–51 (DSFDEMNLKSELLRGIYAYGFERPSAIQQ) match the Q motif motif. The Helicase ATP-binding domain maps to 54–224 (IMPVIKGHDV…TKFMRDPVRI (171 aa)). 67–74 (AQSGTGKT) provides a ligand contact to ATP. A DEAD box motif is present at residues 172–175 (DEAD). A Helicase C-terminal domain is found at 235–396 (GIKQFYIAVE…EMPMNVADLI (162 aa)).

The protein belongs to the DEAD box helicase family. eIF4A subfamily. Component of the eIF4F complex, which composition varies with external and internal environmental conditions. It is composed of at least eIF4A, eIF4E and eIF4G.

The protein localises to the cytoplasm. The enzyme catalyses ATP + H2O = ADP + phosphate + H(+). ATP-dependent RNA helicase which is a subunit of the eIF4F complex involved in cap recognition and is required for mRNA binding to ribosome. In the current model of translation initiation, eIF4A unwinds RNA secondary structures in the 5'-UTR of mRNAs which is necessary to allow efficient binding of the small ribosomal subunit, and subsequent scanning for the initiator codon. This is ATP-dependent RNA helicase eIF4A (TIF1) from Pyricularia oryzae (strain 70-15 / ATCC MYA-4617 / FGSC 8958) (Rice blast fungus).